The chain runs to 2206 residues: Genome polyprotein (2206 aa).

A lipid anchor (N-myristoyl glycine; by host) is attached at G2. The Cytoplasmic segment spans residues 2 to 1517; that stretch reads GAQVSSQKVG…NINRAMTILQ (1516 aa). Amphipathic alpha-helix regions lie at residues 579–599 and 579–603; these read GIED…LPKQ and GIED…QDSL. Catalysis depends on for protease 2A activity residues H898 and D916. Positions 933 and 935 each coordinate Zn(2+). C987 (for protease 2A activity) is an active-site residue. Residues C993 and H995 each contribute to the Zn(2+) site. Residues 1125–1197 form a membrane-binding region; that stretch reads GDSWLKKFTE…HQSCPSQEHQ (73 aa). The interval 1125 to 1263 is oligomerization; it reads GDSWLKKFTE…SPGTGKSVAT (139 aa). An RNA-binding region spans residues 1146-1150; sequence SNKIS. Positions 1229–1385 constitute an SF3 helicase domain; it reads EHTINNYIQF…GEYSRDGKLN (157 aa). Residue 1253–1260 participates in ATP binding; the sequence is GSPGTGKS. Residues C1393, C1396, C1405, and C1410 each contribute to the Zn(2+) site. A C4-type zinc finger spans residues 1393–1410; it reads CKDCHQPANFKRCCPLVC. Residues 1437-1444 form an RNA-binding region; it reads ERNRRSNI. Residues 1448 to 1453 are oligomerization; it reads MEALFQ. Residues 1518–1533 lie within the membrane without spanning it; that stretch reads AVTTFAAVAGVVYVMY. The Cytoplasmic portion of the chain corresponds to 1534–2206; the sequence is KLFAGHQGAY…TLYRRWLDSF (673 aa). The residue at position 1543 (Y1543) is an O-(5'-phospho-RNA)-tyrosine. A Peptidase C3 domain is found at 1563–1741; that stretch reads GPGFDYAVAM…FAAALKRSYF (179 aa). Residues H1602, E1633, and C1709 each act as for protease 3C activity in the active site. One can recognise a RdRp catalytic domain in the interval 1972-2087; it reads EKLFAFDYTG…SYPHEVDASL (116 aa). Residues D1978 and D2073 each coordinate Mg(2+).

The protein belongs to the picornaviruses polyprotein family. Interacts with capsid protein VP1 and capsid protein VP3 to form heterotrimeric protomers. In terms of assembly, interacts with capsid protein VP0, and capsid protein VP3 to form heterotrimeric protomers. Interacts with human PVR. Five protomers subsequently associate to form pentamers which serve as building blocks for the capsid. Interacts with capsid protein VP2, capsid protein VP3 and capsid protein VP4 following cleavage of capsid protein VP0. As to quaternary structure, interacts with capsid protein VP1 and capsid protein VP3 in the mature capsid. Interacts with capsid protein VP0 and capsid protein VP1 to form heterotrimeric protomers. Five protomers subsequently associate to form pentamers which serve as building blocks for the capsid. Interacts with capsid protein VP4 in the mature capsid. Interacts with protein 2C; this interaction may be important for virion morphogenesis. In terms of assembly, interacts with capsid protein VP1 and capsid protein VP3. As to quaternary structure, homodimer. Homohexamer; forms a hexameric ring structure with 6-fold symmetry characteristic of AAA+ ATPases. Interacts (via N-terminus) with host RTN3 (via reticulon domain); this interaction is important for viral replication. Interacts with capsid protein VP3; this interaction may be important for virion morphogenesis. In terms of assembly, interacts with protein 3CD. As to quaternary structure, homodimer. Interacts with host GBF1. Interacts (via GOLD domain) with host ACBD3 (via GOLD domain); this interaction allows the formation of a viral protein 3A/ACBD3 heterotetramer with a 2:2 stoichiometry, which will stimulate the recruitment of host PI4KB in order to synthesize PI4P at the viral RNA replication sites. Interacts with RNA-directed RNA polymerase. In terms of assembly, interacts with protein 3AB and with RNA-directed RNA polymerase. As to quaternary structure, interacts with Viral protein genome-linked and with protein 3CD. The cofactor is Mg(2+). Specific enzymatic cleavages in vivo by the viral proteases yield processing intermediates and the mature proteins. In terms of processing, myristoylation is required for the formation of pentamers during virus assembly. Further assembly of 12 pentamers and a molecule of genomic RNA generates the provirion. Post-translationally, during virion maturation, immature virions are rendered infectious following cleavage of VP0 into VP4 and VP2. This maturation seems to be an autocatalytic event triggered by the presence of RNA in the capsid and it is followed by a conformational change infectious virion. Myristoylation is required during RNA encapsidation and formation of the mature virus particle. In terms of processing, VPg is uridylylated by the polymerase into VPg-pUpU. This acts as a nucleotide-peptide primer for the genomic RNA replication.

The protein localises to the virion. Its subcellular location is the host cytoplasm. The protein resides in the host cytoplasmic vesicle membrane. It is found in the host nucleus. It catalyses the reaction a ribonucleoside 5'-triphosphate + H2O = a ribonucleoside 5'-diphosphate + phosphate + H(+). It carries out the reaction Selective cleavage of Tyr-|-Gly bond in the picornavirus polyprotein.. The catalysed reaction is RNA(n) + a ribonucleoside 5'-triphosphate = RNA(n+1) + diphosphate. The enzyme catalyses Selective cleavage of Gln-|-Gly bond in the poliovirus polyprotein. In other picornavirus reactions Glu may be substituted for Gln, and Ser or Thr for Gly.. Its activity is regulated as follows. Replication or transcription is subject to high level of random mutations by the nucleotide analog ribavirin. In terms of biological role, forms an icosahedral capsid of pseudo T=3 symmetry with capsid proteins VP2 and VP3. The capsid is 300 Angstroms in diameter, composed of 60 copies of each capsid protein and enclosing the viral positive strand RNA genome. Capsid protein VP1 mainly forms the vertices of the capsid. Capsid protein VP1 interacts with host cell receptor PVR to provide virion attachment to target host cells. This attachment induces virion internalization predominantly through clathrin- and caveolin-independent endocytosis in Hela cells and through caveolin-mediated endocytosis in brain microvascular endothelial cells. Tyrosine kinases are probably involved in the entry process. Virus binding to PVR induces increased junctional permeability and rearrangement of junctional proteins. Modulation of endothelial tight junctions, as well as cytolytic infection of endothelial cells themselves, may result in loss of endothelial integrity which may help the virus to reach the CNS. After binding to its receptor, the capsid undergoes conformational changes. Capsid protein VP1 N-terminus (that contains an amphipathic alpha-helix) and capsid protein VP4 are externalized. Together, they shape a pore in the host membrane through which viral genome is translocated to host cell cytoplasm. Its function is as follows. Forms an icosahedral capsid of pseudo T=3 symmetry with capsid proteins VP2 and VP3. The capsid is 300 Angstroms in diameter, composed of 60 copies of each capsid protein and enclosing the viral positive strand RNA genome. Lies on the inner surface of the capsid shell. After binding to the host receptor, the capsid undergoes conformational changes. Capsid protein VP4 is released, Capsid protein VP1 N-terminus is externalized, and together, they shape a pore in the host membrane through which the viral genome is translocated into the host cell cytoplasm. Functionally, component of immature procapsids, which is cleaved into capsid proteins VP4 and VP2 after maturation. Allows the capsid to remain inactive before the maturation step. In terms of biological role, cysteine protease that cleaves viral polyprotein and specific host proteins. It is responsible for the autocatalytic cleavage between the P1 and P2 regions, which is the first cleavage occurring in the polyprotein. Also cleaves the host translation initiation factor EIF4G1, in order to shut down the capped cellular mRNA translation. Inhibits the host nucleus-cytoplasm protein and RNA trafficking by cleaving host members of the nuclear pores including NUP98, NUP62 and NUP153. Counteracts stress granule formation probably by antagonizing its assembly or promoting its dissassembly. Cleaves and inhibits host IFIH1/MDA5, thereby inhibiting the type-I IFN production and the establishment of the antiviral state. Cleaves and inhibits host MAVS, thereby inhibiting the type-I IFN production and the establishment of the antiviral state. Its function is as follows. Plays an essential role in the virus replication cycle by acting as a viroporin. Creates a pore in the host endoplasmic reticulum and as a consequence releases Ca2+ in the cytoplasm of infected cell. In turn, high levels of cytoplasmic calcium may trigger membrane trafficking and transport of viral ER-associated proteins to viroplasms, sites of viral genome replication. Induces and associates with structural rearrangements of intracellular membranes. Displays RNA-binding, nucleotide binding and NTPase activities. May play a role in virion morphogenesis and viral RNA encapsidation by interacting with the capsid protein VP3. Functionally, localizes the viral replication complex to the surface of membranous vesicles. Together with protein 3CD binds the Cis-Active RNA Element (CRE) which is involved in RNA synthesis initiation. Acts as a cofactor to stimulate the activity of 3D polymerase, maybe through a nucleid acid chaperone activity. In terms of biological role, localizes the viral replication complex to the surface of membranous vesicles. It inhibits host cell endoplasmic reticulum-to-Golgi apparatus transport and causes the disassembly of the Golgi complex, possibly through GBF1 interaction. This would result in depletion of MHC, trail receptors and IFN receptors at the host cell surface. Plays an essential role in viral RNA replication by recruiting ACBD3 and PI4KB at the viral replication sites, thereby allowing the formation of the rearranged membranous structures where viral replication takes place. Its function is as follows. Acts as a primer for viral RNA replication and remains covalently bound to viral genomic RNA. VPg is uridylylated prior to priming replication into VPg-pUpU. The oriI viral genomic sequence may act as a template for this. The VPg-pUpU is then used as primer on the genomic RNA poly(A) by the RNA-dependent RNA polymerase to replicate the viral genome. During genome replication, the VPg-RNA linkage is removed by the host TDP2, thereby accelerating replication. During the late stage of the replication cycle, host TDP2 is excluded from sites of viral RNA synthesis and encapsidation, allowing for the generation of progeny virions. Involved in the viral replication complex and viral polypeptide maturation. It exhibits protease activity with a specificity and catalytic efficiency that is different from protease 3C. Protein 3CD lacks polymerase activity. Protein 3CD binds to the 5'UTR of the viral genome. Functionally, major viral protease that mediates proteolytic processing of the polyprotein. Cleaves host EIF5B, contributing to host translation shutoff. Also cleaves host PABPC1, contributing to host translation shutoff. Cleaves host RIGI and thus contributes to the inhibition of type I interferon production. Cleaves host NLRP1, triggers host N-glycine-mediated degradation of the autoinhibitory NLRP1 N-terminal fragment. Inhibits the integrated stress response (ISR) in the infected cell by cleaving host G3BP1. Stress granule formation is thus inhibited, which allows protein synthesis and viral replication. In terms of biological role, replicates the viral genomic RNA on the surface of intracellular membranes. May form linear arrays of subunits that propagate along a strong head-to-tail interaction called interface-I. Covalently attaches UMP to a tyrosine of VPg, which is used to prime RNA synthesis. The positive stranded RNA genome is first replicated at virus induced membranous vesicles, creating a dsRNA genomic replication form. This dsRNA is then used as template to synthesize positive stranded RNA genomes. ss(+)RNA genomes are either translated, replicated or encapsidated. This chain is Genome polyprotein, found in Poliovirus type 3 (strains P3/Leon/37 and P3/Leon 12A[1]B).